Reading from the N-terminus, the 156-residue chain is Small ribosomal subunit protein uS7c (156 aa).

It belongs to the universal ribosomal protein uS7 family. As to quaternary structure, part of the 30S ribosomal subunit.

The protein localises to the plastid. It is found in the chloroplast. In terms of biological role, one of the primary rRNA binding proteins, it binds directly to 16S rRNA where it nucleates assembly of the head domain of the 30S subunit. The sequence is that of Small ribosomal subunit protein uS7c (rps7) from Cyanidium caldarium (Red alga).